A 570-amino-acid polypeptide reads, in one-letter code: Sulfite reductase [NADPH] hemoprotein beta-component (570 aa).

Residues cysteine 434, cysteine 440, cysteine 479, and cysteine 483 each contribute to the [4Fe-4S] cluster site. Cysteine 483 lines the siroheme pocket.

It belongs to the nitrite and sulfite reductase 4Fe-4S domain family. As to quaternary structure, alpha(8)-beta(8). The alpha component is a flavoprotein, the beta component is a hemoprotein. The cofactor is siroheme. [4Fe-4S] cluster is required as a cofactor.

It carries out the reaction hydrogen sulfide + 3 NADP(+) + 3 H2O = sulfite + 3 NADPH + 4 H(+). It functions in the pathway sulfur metabolism; hydrogen sulfide biosynthesis; hydrogen sulfide from sulfite (NADPH route): step 1/1. Its function is as follows. Component of the sulfite reductase complex that catalyzes the 6-electron reduction of sulfite to sulfide. This is one of several activities required for the biosynthesis of L-cysteine from sulfate. This is Sulfite reductase [NADPH] hemoprotein beta-component from Salmonella heidelberg (strain SL476).